We begin with the raw amino-acid sequence, 292 residues long: Tissue factor (292 aa).

The N-terminal stretch at methionine 1–threonine 35 is a signal peptide. Residues threonine 36–glutamate 248 lie on the Extracellular side of the membrane. Asparagine 43 is a glycosylation site (N-linked (GlcNAc...) asparagine). Positions tryptophan 46–serine 48 match the WKS motif motif. Residues cysteine 81 and cysteine 89 are joined by a disulfide bond. N-linked (GlcNAc...) asparagine glycosylation is found at asparagine 153 and asparagine 181. Cysteine 215 and cysteine 238 form a disulfide bridge. Residues leucine 249–leucine 271 traverse the membrane as a helical segment. Residues histidine 272 to alanine 292 are Cytoplasmic-facing. Cysteine 274 carries the S-palmitoyl cysteine lipid modification.

It belongs to the tissue factor family. In terms of assembly, interacts with HSPE; the interaction, inhibited by heparin, promotes the generation of activated factor X and activates coagulation in the presence of activated factor VII.

The protein resides in the membrane. Initiates blood coagulation by forming a complex with circulating factor VII or VIIa. The [TF:VIIa] complex activates factors IX or X by specific limited proteolysis. TF plays a role in normal hemostasis by initiating the cell-surface assembly and propagation of the coagulation protease cascade. This is Tissue factor (F3) from Bos taurus (Bovine).